Consider the following 275-residue polypeptide: Acetyl-coenzyme A carboxylase carboxyl transferase subunit beta (275 aa).

The 258-residue stretch at Lys18–Ala275 folds into the CoA carboxyltransferase N-terminal domain. A disordered region spans residues Pro23–Arg47. Residues Pro26–Pro38 show a composition bias toward polar residues.

This sequence belongs to the AccD/PCCB family. In terms of assembly, acetyl-CoA carboxylase is a heterohexamer composed of biotin carboxyl carrier protein (AccB), biotin carboxylase (AccC) and two subunits each of ACCase subunit alpha (AccA) and ACCase subunit beta (AccD).

It is found in the cytoplasm. The enzyme catalyses N(6)-carboxybiotinyl-L-lysyl-[protein] + acetyl-CoA = N(6)-biotinyl-L-lysyl-[protein] + malonyl-CoA. Its pathway is lipid metabolism; malonyl-CoA biosynthesis; malonyl-CoA from acetyl-CoA: step 1/1. In terms of biological role, component of the acetyl coenzyme A carboxylase (ACC) complex. Biotin carboxylase (BC) catalyzes the carboxylation of biotin on its carrier protein (BCCP) and then the CO(2) group is transferred by the transcarboxylase to acetyl-CoA to form malonyl-CoA. This Alkaliphilus oremlandii (strain OhILAs) (Clostridium oremlandii (strain OhILAs)) protein is Acetyl-coenzyme A carboxylase carboxyl transferase subunit beta.